The chain runs to 194 residues: Peptidyl-tRNA hydrolase (194 aa).

Tyrosine 17 lines the tRNA pocket. Histidine 22 (proton acceptor) is an active-site residue. 3 residues coordinate tRNA: tyrosine 68, asparagine 70, and asparagine 116.

Belongs to the PTH family. Monomer.

Its subcellular location is the cytoplasm. The enzyme catalyses an N-acyl-L-alpha-aminoacyl-tRNA + H2O = an N-acyl-L-amino acid + a tRNA + H(+). Functionally, hydrolyzes ribosome-free peptidyl-tRNAs (with 1 or more amino acids incorporated), which drop off the ribosome during protein synthesis, or as a result of ribosome stalling. In terms of biological role, catalyzes the release of premature peptidyl moieties from peptidyl-tRNA molecules trapped in stalled 50S ribosomal subunits, and thus maintains levels of free tRNAs and 50S ribosomes. The polypeptide is Peptidyl-tRNA hydrolase (Pseudomonas aeruginosa (strain LESB58)).